Here is a 587-residue protein sequence, read N- to C-terminus: Aspartate--tRNA ligase (587 aa).

Glu-174 is a binding site for L-aspartate. The tract at residues 198 to 201 (QITK) is aspartate. L-aspartate is bound at residue Arg-220. Residues 220 to 222 (RDE) and Gln-229 each bind ATP. His-443 is an L-aspartate binding site. Glu-477 contributes to the ATP binding site. Arg-484 is an L-aspartate binding site. Position 529–532 (529–532 (GLDR)) interacts with ATP.

The protein belongs to the class-II aminoacyl-tRNA synthetase family. Type 1 subfamily. In terms of assembly, homodimer.

It localises to the cytoplasm. The catalysed reaction is tRNA(Asp) + L-aspartate + ATP = L-aspartyl-tRNA(Asp) + AMP + diphosphate. Its function is as follows. Catalyzes the attachment of L-aspartate to tRNA(Asp) in a two-step reaction: L-aspartate is first activated by ATP to form Asp-AMP and then transferred to the acceptor end of tRNA(Asp). This is Aspartate--tRNA ligase from Streptococcus pneumoniae (strain Taiwan19F-14).